The sequence spans 75 residues: UPF0512 protein D (75 aa).

The disordered stretch occupies residues 1-20 (MAIFKSISSISNSTGSMGSS).

The protein belongs to the UPF0512 family.

The chain is UPF0512 protein D from Dictyostelium discoideum (Social amoeba).